An 875-amino-acid polypeptide reads, in one-letter code: Cytosolic phospholipase A2 epsilon (875 aa).

The disordered stretch occupies residues Thr-16–Ser-70. The C2 domain maps to Val-60–Phe-183. Residues Pro-61–Ser-70 show a composition bias toward low complexity. Positions 97, 103, 153, 155, and 161 each coordinate Ca(2+). The PLA2c domain occupies Pro-332–Ser-875. Catalysis depends on Ser-420, which acts as the Nucleophile. Catalysis depends on Asp-708, which acts as the Proton acceptor. Phosphoserine is present on Ser-808. The segment at Glu-865–Ser-875 is required for localization at membrane structures.

Ca(2+) serves as cofactor. As to expression, predominantly expressed in brain, heart, skeletal muscle, testis and thyroid. Expressed in neurons but not astrocytes or microglia. Expressed at lower level in stomach.

It localises to the cytoplasm. It is found in the cytosol. The protein localises to the early endosome membrane. Its subcellular location is the lysosome membrane. The protein resides in the cell membrane. The enzyme catalyses a 1,2-diacyl-sn-glycero-3-phosphoethanolamine + a 1,2-diacyl-sn-glycero-3-phosphocholine = an N-acyl-1,2-diacyl-sn-glycero-3-phosphoethanolamine + a 2-acyl-sn-glycero-3-phosphocholine + H(+). It catalyses the reaction 1-hexadecanoyl-2-octadecanoyl-sn-glycero-3-phosphocholine + 1,2-di-(9Z-octadecenoyl)-sn-glycero-3-phosphoethanolamine = 2-octadecanoyl-sn-glycero-3-phosphocholine + N-hexadecanoyl-1,2-di-(9Z-octadecenoyl)-sn-glycero-3-phosphoethanolamine + H(+). The catalysed reaction is 1-octadecanoyl-2-hexadecanoyl-sn-glycero-3-phosphocholine + 1,2-di-(9Z-octadecenoyl)-sn-glycero-3-phosphoethanolamine = N-octadecanoyl-1,2-di-(9Z-octadecenoyl)-sn-glycero-3-phosphoethanolamine + 2-hexadecanoyl-sn-glycero-3-phosphocholine + H(+). It carries out the reaction 1,2-di-(9Z-octadecenoyl)-sn-glycero-3-phosphoethanolamine + 1,2-dihexadecanoyl-sn-glycero-3-phosphocholine = N-hexadecanoyl-1,2-di-(9Z-octadecenoyl)-sn-glycero-3-phosphoethanolamine + 2-hexadecanoyl-sn-glycero-3-phosphocholine + H(+). The enzyme catalyses 1,2-di-(5Z,8Z,11Z,14Z-eicosatetraenoyl)-sn-glycero-3-phosphocholine + 1,2-di-(9Z-octadecenoyl)-sn-glycero-3-phosphoethanolamine = N-(5Z,8Z,11Z,14Z-eicosatetraenoyl)-1,2-di-(9Z-octadecenoyl)-sn-glycero-3-phosphoethanolamine + 2-(5Z,8Z,11Z,14Z)-eicosatetraenoyl-sn-glycero-3-phosphocholine + H(+). It catalyses the reaction 2 1,2-di-(9Z-octadecenoyl)-sn-glycero-3-phosphoethanolamine = N,1,2-tri-(9Z-octadecenoyl)-sn-glycero-3-phosphoethanolamine + 2-(9Z-octadecenoyl)-sn-glycero-3-phosphoethanolamine + H(+). The catalysed reaction is a 1,2-diacyl-sn-glycero-3-phosphocholine + H2O = a 1-acyl-sn-glycero-3-phosphocholine + a fatty acid + H(+). It carries out the reaction 1-(1Z-octadecenyl)-2-(9Z-octadecenoyl)-sn-glycero-3-phosphoethanolamine + 1,2-dihexadecanoyl-sn-glycero-3-phosphocholine = 1-O-(1Z-octadecenoyl)-2-(9Z-octadecenoyl)-sn-glycero-3-phospho-N-hexadecanoyl-ethanolamine + 2-hexadecanoyl-sn-glycero-3-phosphocholine + H(+). The enzyme catalyses 1-hexadecanoyl-2-(5Z,8Z,11Z,14Z-eicosatetraenoyl)-sn-glycero-3-phosphocholine + H2O = 1-hexadecanoyl-sn-glycero-3-phosphocholine + (5Z,8Z,11Z,14Z)-eicosatetraenoate + H(+). It catalyses the reaction 1-hexadecanoyl-sn-glycero-3-phosphocholine + H2O = sn-glycerol 3-phosphocholine + hexadecanoate + H(+). Its activity is regulated as follows. Stimulated by cytosolic Ca(2+). Stimulated by anionic phospholipids such as phosphatidylserine. Calcium-dependent N-acyltransferase involved in the biosynthesis of N-acyl ethanolamines (NAEs) in the brain. Transfers the sn-1 fatty acyl chain of phosphatidylcholine (fatty acyl donor) to the amine group of phosphatidylethanolamine (fatty acyl acceptor) to generate N-acyl phosphatidylethanolamine (NAPE). Similarly can use plasmenylethanolamine as a fatty acyl acceptor to form N-acyl plasmenylethanolamine (N-Acyl-PlsEt). Both NAPE and N-Acyl-PlsEt can serve as precursors of bioactive NAEs like N-arachidonoyl phosphatidylethanolamine also called anandamide. Has weak phospholipase A2 and lysophospholipase activities. Regulates intracellular membrane trafficking that requires modulation of membrane curvature as it occurs by enrichment in lysophospholipids. Promotes tubule formation involved in clathrin-independent endocytotic trafficking and cargo recycling. The protein is Cytosolic phospholipase A2 epsilon (Pla2g4e) of Mus musculus (Mouse).